An 820-amino-acid polypeptide reads, in one-letter code: Nuclear pore complex protein Nup93 (820 aa).

It belongs to the nucleoporin interacting component (NIC) family.

It localises to the nucleus membrane. The protein localises to the nucleus. It is found in the nuclear pore complex. Functionally, plays a role in the nuclear pore complex (NPC) assembly and/or maintenance. This chain is Nuclear pore complex protein Nup93 (dye), found in Danio rerio (Zebrafish).